We begin with the raw amino-acid sequence, 837 residues long: Translation initiation factor IF-2 (837 aa).

Residues 94–252 (QRSPEEIEAE…NAHGFQSPTG (159 aa)) are disordered. Over residues 96–136 (SPEEIEAERKRELDERRAVENAARQKAEEEARVRAEEEARR) the composition is skewed to basic and acidic residues. A compositionally biased stretch (low complexity) spans 137 to 171 (QPAAPSAPAEAVAAPAPVAEPVREAAPVVAAAPAA). 2 stretches are compositionally biased toward basic and acidic residues: residues 172 to 213 (DTRK…EKAP) and 221 to 230 (TTDEESDGFR). The segment covering 231–244 (RGGRGKAKLKKRNA) has biased composition (basic residues). The tr-type G domain maps to 337–506 (PRAPVVTVMG…LLQAEVLELT (170 aa)). Positions 346–353 (GHVDHGKT) are G1. Residue 346 to 353 (GHVDHGKT) participates in GTP binding. The segment at 371 to 375 (GITQH) is G2. The interval 392-395 (DTPG) is G3. GTP-binding positions include 392–396 (DTPGH) and 446–449 (NKID). Residues 446–449 (NKID) form a G4 region. A G5 region spans residues 482–484 (SAK).

Belongs to the TRAFAC class translation factor GTPase superfamily. Classic translation factor GTPase family. IF-2 subfamily.

It is found in the cytoplasm. One of the essential components for the initiation of protein synthesis. Protects formylmethionyl-tRNA from spontaneous hydrolysis and promotes its binding to the 30S ribosomal subunits. Also involved in the hydrolysis of GTP during the formation of the 70S ribosomal complex. The polypeptide is Translation initiation factor IF-2 (Pseudomonas fluorescens (strain Pf0-1)).